The chain runs to 622 residues: 1-deoxy-D-xylulose-5-phosphate synthase (622 aa).

Residues H80 and 121–123 contribute to the thiamine diphosphate site; that span reads GHS. D152 provides a ligand contact to Mg(2+). Residues 153–154, N181, Y288, and E370 contribute to the thiamine diphosphate site; that span reads GA. Residue N181 coordinates Mg(2+).

It belongs to the transketolase family. DXPS subfamily. As to quaternary structure, homodimer. Mg(2+) serves as cofactor. The cofactor is thiamine diphosphate.

It catalyses the reaction D-glyceraldehyde 3-phosphate + pyruvate + H(+) = 1-deoxy-D-xylulose 5-phosphate + CO2. It participates in metabolic intermediate biosynthesis; 1-deoxy-D-xylulose 5-phosphate biosynthesis; 1-deoxy-D-xylulose 5-phosphate from D-glyceraldehyde 3-phosphate and pyruvate: step 1/1. Its function is as follows. Catalyzes the acyloin condensation reaction between C atoms 2 and 3 of pyruvate and glyceraldehyde 3-phosphate to yield 1-deoxy-D-xylulose-5-phosphate (DXP). The protein is 1-deoxy-D-xylulose-5-phosphate synthase of Shewanella denitrificans (strain OS217 / ATCC BAA-1090 / DSM 15013).